Here is a 187-residue protein sequence, read N- to C-terminus: Elongation factor P (187 aa).

The protein belongs to the elongation factor P family.

The protein localises to the cytoplasm. The protein operates within protein biosynthesis; polypeptide chain elongation. Involved in peptide bond synthesis. Stimulates efficient translation and peptide-bond synthesis on native or reconstituted 70S ribosomes in vitro. Probably functions indirectly by altering the affinity of the ribosome for aminoacyl-tRNA, thus increasing their reactivity as acceptors for peptidyl transferase. In Corynebacterium efficiens (strain DSM 44549 / YS-314 / AJ 12310 / JCM 11189 / NBRC 100395), this protein is Elongation factor P.